Here is a 349-residue protein sequence, read N- to C-terminus: Deoxyguanosinetriphosphate triphosphohydrolase-like protein (349 aa).

Positions 80 to 197 (RLTHTLEVAQ…VKYSDKIAYV (118 aa)) constitute an HD domain.

The protein belongs to the dGTPase family. Type 2 subfamily.

The polypeptide is Deoxyguanosinetriphosphate triphosphohydrolase-like protein (Clostridium tetani (strain Massachusetts / E88)).